The following is a 161-amino-acid chain: Putative TRAP transporter small permease protein HI_1030 (161 aa).

4 helical membrane-spanning segments follow: residues Leu13–Val33, Tyr51–Val71, Ala86–Gly106, and Ile135–Ile155.

It belongs to the TRAP transporter small permease family.

Its subcellular location is the cell inner membrane. This chain is Putative TRAP transporter small permease protein HI_1030, found in Haemophilus influenzae (strain ATCC 51907 / DSM 11121 / KW20 / Rd).